Here is a 453-residue protein sequence, read N- to C-terminus: UDP-N-acetylmuramoylalanine--D-glutamate ligase (453 aa).

115–121 is an ATP binding site; it reads GSNGKTT.

This sequence belongs to the MurCDEF family.

It is found in the cytoplasm. It catalyses the reaction UDP-N-acetyl-alpha-D-muramoyl-L-alanine + D-glutamate + ATP = UDP-N-acetyl-alpha-D-muramoyl-L-alanyl-D-glutamate + ADP + phosphate + H(+). It participates in cell wall biogenesis; peptidoglycan biosynthesis. Functionally, cell wall formation. Catalyzes the addition of glutamate to the nucleotide precursor UDP-N-acetylmuramoyl-L-alanine (UMA). In Koribacter versatilis (strain Ellin345), this protein is UDP-N-acetylmuramoylalanine--D-glutamate ligase.